We begin with the raw amino-acid sequence, 608 residues long: Chaperone protein HtpG (608 aa).

The segment at 1 to 332 (MQFQTEVNQL…VEDLPLNVSR (332 aa)) is a; substrate-binding. The b stretch occupies residues 333-536 (EILQENQILK…KNKPDFAMQQ (204 aa)). The segment at 537–608 (LLKQMGQEQN…LTKIINKAFS (72 aa)) is c.

The protein belongs to the heat shock protein 90 family. Homodimer.

It localises to the cytoplasm. Functionally, molecular chaperone. Has ATPase activity. This is Chaperone protein HtpG from Campylobacter jejuni subsp. jejuni serotype O:6 (strain 81116 / NCTC 11828).